Consider the following 609-residue polypeptide: Heat shock factor protein (609 aa).

Positions 1 to 33 (MIQTASTISSNGGTNQGMESSSANSPEMNGTQN) are enriched in polar residues. The interval 1-47 (MIQTASTISSNGGTNQGMESSSANSPEMNGTQNSMSVGMSGSGSSQN) is disordered. Residues 34–45 (SMSVGMSGSGSS) show a composition bias toward low complexity. A DNA-binding region spans residues 50–156 (ITQFSNKLYN…LLCLVTRKKA (107 aa)). Disordered stretches follow at residues 255–298 (PTVS…GKYR), 310–371 (SSFN…TDPK), 411–445 (NNTS…QPVQ), and 567–609 (SNGN…SIGA). 4 stretches are compositionally biased toward polar residues: residues 257-277 (VSPT…TTAN), 339-360 (DSFN…TDVP), 422-443 (YRGS…NLQP), and 567-597 (SNGN…SSPR). Ser350 bears the Phosphoserine mark. Residues 598-609 (QVRKKRKSSIGA) show a composition bias toward basic residues.

It belongs to the HSF family. As to quaternary structure, homotrimer.

Its subcellular location is the nucleus. DNA-binding protein that specifically binds heat shock promoter elements (HSE) and activates transcription. Also required for growth at normal temperatures. The chain is Heat shock factor protein (hsf1) from Schizosaccharomyces pombe (strain 972 / ATCC 24843) (Fission yeast).